Reading from the N-terminus, the 174-residue chain is Suppressor of RNA silencing (174 aa).

Residues 86–116 (HAQLRSLNAELDTLEAREESLRAQIKALSAG) are a coiled coil.

Belongs to the virgaviridae suppressor of RNA silencing family.

Functionally, suppressor of RNA-mediated gene silencing, also known as post-transcriptional gene silencing (PTGS), a mechanism of plant viral defense that performs sequence-specific inhibition of viral mRNAs expression. This chain is Suppressor of RNA silencing, found in Soil-borne wheat mosaic virus (strain United States/Nebraska/1981) (SBWMV).